Reading from the N-terminus, the 218-residue chain is Ribose-5-phosphate isomerase A (218 aa).

Substrate contacts are provided by residues 28–31 (TGST), 81–84 (DGAD), and 94–97 (KGGG). The active-site Proton acceptor is the Glu103. Position 121 (Lys121) interacts with substrate.

Belongs to the ribose 5-phosphate isomerase family. In terms of assembly, homodimer.

The enzyme catalyses aldehydo-D-ribose 5-phosphate = D-ribulose 5-phosphate. It participates in carbohydrate degradation; pentose phosphate pathway; D-ribose 5-phosphate from D-ribulose 5-phosphate (non-oxidative stage): step 1/1. Functionally, catalyzes the reversible conversion of ribose-5-phosphate to ribulose 5-phosphate. The sequence is that of Ribose-5-phosphate isomerase A from Psychromonas ingrahamii (strain DSM 17664 / CCUG 51855 / 37).